A 1573-amino-acid chain; its full sequence is Synaptojanin-1 (1573 aa).

The 324-residue stretch at 119–442 (VRKVLNSGNF…GDSISKIYAG (324 aa)) folds into the SAC domain. The interval 500–899 (GSLRVSEQTL…GPPDGTVLVS (400 aa)) is catalytic. A phosphoserine mark is found at Ser820 and Ser830. The RRM domain occupies 902 to 971 (SSLPENNFFD…RTITIALKSP (70 aa)). Over residues 1029 to 1054 (HLQPSSSSGLGTSPSSSPRTSPCQSP) the composition is skewed to low complexity. Disordered stretches follow at residues 1029–1322 (HLQP…PLKI), 1341–1360 (SVQTSPVPTPDPKRLIQLPS), 1370–1463 (VSCM…GFKD), and 1535–1573 (SRRPPPPPVPLLPPGTSPPVDPFTTLASKASPTLDFTER). Ser1053 is modified (phosphoserine). Pro residues predominate over residues 1108–1130 (PPPPRPVAPPTRPAPPQRPPPPS). 2 positions are modified to phosphoserine: Ser1150 and Ser1178. The residue at position 1201 (Arg1201) is an Omega-N-methylarginine. A Phosphothreonine modification is found at Thr1220. A compositionally biased stretch (polar residues) spans 1221–1234 (PESQSKTSETSKGS). Ser1292 carries the post-translational modification Phosphoserine. A compositionally biased stretch (low complexity) spans 1293-1304 (SHSLPSEASSQP). A compositionally biased stretch (basic and acidic residues) spans 1313–1322 (DGKRESPLKI). 2 positions are modified to phosphoserine: Ser1318 and Ser1345. Position 1349 is a phosphothreonine (Thr1349). Polar residues predominate over residues 1382–1407 (RSQSQENMRSSPNPFITGLTRTNPFS). 3 consecutive repeat copies span residues 1396-1398 (FIT), 1406-1408 (FSD), and 1417-1419 (FRA). Residues 1396–1419 (FITGLTRTNPFSDRTAAPGNPFRA) are 3 X 3 AA repeats of N-P-F. Residues 1536 to 1555 (RRPPPPPVPLLPPGTSPPVD) show a composition bias toward pro residues. Phosphoserine is present on residues Ser1551 and Ser1565.

The protein belongs to the synaptojanin family. This sequence in the central section; belongs to the inositol 1,4,5-trisphosphate 5-phosphatase family. In terms of assembly, interacts with ASH/GRB2. Interacts with PACSIN1, PACSIN2 and PACSIN3. Interacts with AMPH, SH3GL1, SH3GL2 and SH3GL3. Interacts with MYO1E (via SH3 domain). Interacts with BIN1 and DNM1. Interacts with EPS15.

Its subcellular location is the cytoplasm. It is found in the perinuclear region. The enzyme catalyses a 1,2-diacyl-sn-glycero-3-phospho-(1D-myo-inositol-4,5-bisphosphate) + H2O = a 1,2-diacyl-sn-glycero-3-phospho-(1D-myo-inositol 4-phosphate) + phosphate. Phosphatase that acts on various phosphoinositides, including phosphatidylinositol 4-phosphate, phosphatidylinositol (4,5)-bisphosphate and phosphatidylinositol (3,4,5)-trisphosphate. Has a role in clathrin-mediated endocytosis. Hydrolyzes PIP2 bound to actin regulatory proteins resulting in the rearrangement of actin filaments downstream of tyrosine kinase and ASH/GRB2. The sequence is that of Synaptojanin-1 (SYNJ1) from Homo sapiens (Human).